The primary structure comprises 486 residues: Glutamyl-tRNA(Gln) amidotransferase subunit A (486 aa).

Residues Lys-76 and Ser-151 each act as charge relay system in the active site. Catalysis depends on Ser-175, which acts as the Acyl-ester intermediate.

It belongs to the amidase family. GatA subfamily. In terms of assembly, heterotrimer of A, B and C subunits.

The enzyme catalyses L-glutamyl-tRNA(Gln) + L-glutamine + ATP + H2O = L-glutaminyl-tRNA(Gln) + L-glutamate + ADP + phosphate + H(+). In terms of biological role, allows the formation of correctly charged Gln-tRNA(Gln) through the transamidation of misacylated Glu-tRNA(Gln) in organisms which lack glutaminyl-tRNA synthetase. The reaction takes place in the presence of glutamine and ATP through an activated gamma-phospho-Glu-tRNA(Gln). The sequence is that of Glutamyl-tRNA(Gln) amidotransferase subunit A from Chromohalobacter salexigens (strain ATCC BAA-138 / DSM 3043 / CIP 106854 / NCIMB 13768 / 1H11).